The sequence spans 352 residues: Ribosomal lysine N-methyltransferase 5 (352 aa).

S-adenosyl-L-methionine is bound by residues Trp-107, 161–163 (GSG), Asp-183, Trp-244, and Leu-274.

This sequence belongs to the class I-like SAM-binding methyltransferase superfamily. RKM5 family.

In terms of biological role, S-adenosyl-L-methionine-dependent protein-lysine N-methyltransferase that methylates 60S ribosomal protein L1. The chain is Ribosomal lysine N-methyltransferase 5 (RKM5) from Candida glabrata (strain ATCC 2001 / BCRC 20586 / JCM 3761 / NBRC 0622 / NRRL Y-65 / CBS 138) (Yeast).